A 544-amino-acid chain; its full sequence is uncharacterized protein (544 aa).

An N-terminal signal peptide occupies residues 1-22; it reads MYFSQNAIILVMLMFVISAVFY.

This is an uncharacterized protein from Methanocaldococcus jannaschii (strain ATCC 43067 / DSM 2661 / JAL-1 / JCM 10045 / NBRC 100440) (Methanococcus jannaschii).